A 212-amino-acid polypeptide reads, in one-letter code: Thiamine-phosphate synthase (212 aa).

Residues 35–39 (QLRRK) and asparagine 67 contribute to the 4-amino-2-methyl-5-(diphosphooxymethyl)pyrimidine site. The Mg(2+) site is built by aspartate 68 and aspartate 87. Residue serine 106 coordinates 4-amino-2-methyl-5-(diphosphooxymethyl)pyrimidine. 132-134 (TGS) provides a ligand contact to 2-[(2R,5Z)-2-carboxy-4-methylthiazol-5(2H)-ylidene]ethyl phosphate. Lysine 135 provides a ligand contact to 4-amino-2-methyl-5-(diphosphooxymethyl)pyrimidine. Residues glycine 163 and 183 to 184 (IS) contribute to the 2-[(2R,5Z)-2-carboxy-4-methylthiazol-5(2H)-ylidene]ethyl phosphate site.

It belongs to the thiamine-phosphate synthase family. The cofactor is Mg(2+).

The enzyme catalyses 2-[(2R,5Z)-2-carboxy-4-methylthiazol-5(2H)-ylidene]ethyl phosphate + 4-amino-2-methyl-5-(diphosphooxymethyl)pyrimidine + 2 H(+) = thiamine phosphate + CO2 + diphosphate. It catalyses the reaction 2-(2-carboxy-4-methylthiazol-5-yl)ethyl phosphate + 4-amino-2-methyl-5-(diphosphooxymethyl)pyrimidine + 2 H(+) = thiamine phosphate + CO2 + diphosphate. It carries out the reaction 4-methyl-5-(2-phosphooxyethyl)-thiazole + 4-amino-2-methyl-5-(diphosphooxymethyl)pyrimidine + H(+) = thiamine phosphate + diphosphate. The protein operates within cofactor biosynthesis; thiamine diphosphate biosynthesis; thiamine phosphate from 4-amino-2-methyl-5-diphosphomethylpyrimidine and 4-methyl-5-(2-phosphoethyl)-thiazole: step 1/1. In terms of biological role, condenses 4-methyl-5-(beta-hydroxyethyl)thiazole monophosphate (THZ-P) and 2-methyl-4-amino-5-hydroxymethyl pyrimidine pyrophosphate (HMP-PP) to form thiamine monophosphate (TMP). The polypeptide is Thiamine-phosphate synthase (Chlorobium luteolum (strain DSM 273 / BCRC 81028 / 2530) (Pelodictyon luteolum)).